The primary structure comprises 504 residues: Endochitinase (504 aa).

The first 22 residues, Met1–Gly22, serve as a signal peptide directing secretion. Residues Tyr23–Glu392 form the GH18 domain. The cysteines at positions 27 and 52 are disulfide-linked. Chitin-binding positions include Thr78–Glu79 and Gly105–Asn108. Glu148 serves as the catalytic Proton donor. Chitin contacts are provided by residues Tyr149, Met212 to Asp215, and Trp362. The interval Leu389–Glu450 is disordered. Positions Pro396–Thr408 are enriched in low complexity. 2 repeat units span residues Glu407 to Ser420 and Glu421 to Ser434. The segment at Glu407–Gly448 is 3 X 14 AA approximate tandem repeats of E-T-E-A-Y-[ED]-T-D-E-T-E-E-T-S. Residues Glu409–Glu435 are compositionally biased toward acidic residues. Residues Glu435–Gly448 form a 3; approximate repeat. The region spanning Gly448–Ile504 is the Chitin-binding type-2 domain. Cys480 and Cys493 form a disulfide bridge.

It belongs to the glycosyl hydrolase 18 family. Chitinase class II subfamily. O-glycosylated.

It carries out the reaction Random endo-hydrolysis of N-acetyl-beta-D-glucosaminide (1-&gt;4)-beta-linkages in chitin and chitodextrins.. Its function is as follows. Microfilarial chitinase, which may function to degrade chitin-containing structures in the micro-filaria or in its mosquito vector during parasite development and transmission. In Brugia malayi (Filarial nematode worm), this protein is Endochitinase.